Here is a 158-residue protein sequence, read N- to C-terminus: Large ribosomal subunit protein uL15 (158 aa).

Over residues Met-1–Thr-13 the composition is skewed to basic and acidic residues. Residues Met-1–Ala-45 are disordered. The span at Arg-21 to Val-35 shows a compositional bias: gly residues.

This sequence belongs to the universal ribosomal protein uL15 family. In terms of assembly, part of the 50S ribosomal subunit.

Functionally, binds to the 23S rRNA. In Rhizobium etli (strain CIAT 652), this protein is Large ribosomal subunit protein uL15.